The sequence spans 172 residues: Chromosome-anchoring protein RacA (172 aa).

The H-T-H motif DNA-binding region spans 5–25; that stretch reads TSDVAIRLGVSPKTIQRWVRK. Disordered regions lie at residues 57–76 and 142–172; these read AAMEAPPTPKRPPTPLRNNI and QLNNRPPSSHETSDEPKQKRRGLGRVMGLFA. The span at 62–71 shows a compositional bias: pro residues; it reads PPTPKRPPTP. Positions 83–146 form a coiled coil; that stretch reads ESIEPEIARV…ARLEQQLNNR (64 aa). Residues 142-151 show a composition bias toward polar residues; it reads QLNNRPPSSH.

This sequence belongs to the RacA family.

Its subcellular location is the cytoplasm. In terms of biological role, required for the formation of axial filaments and for anchoring the origin regions at the cell poles in sporulating cells, thus ensuring proper chromosome segregation in the prespore. Binds in a dispersed manner throughout the chromosome but preferentially to sites clustered in the origin portion of the chromosome, causing condensation of the chromosome and its remodeling into an elongated, anchored structure. The polypeptide is Chromosome-anchoring protein RacA (Geobacillus kaustophilus (strain HTA426)).